The sequence spans 942 residues: Alpha,alpha-trehalose-phosphate synthase [UDP-forming] 1 (942 aa).

The tract at residues 28–57 (REKRKSNRARNPNDVAGSSENSENDLRLEG) is disordered. The segment at 92 to 559 (QRLLVVANRL…AETFVSELND (468 aa)) is glycosyltransferase. A disordered region spans residues 815–892 (DMPAIARSRP…LGNSRRPSPE (78 aa)). 2 stretches are compositionally biased toward low complexity: residues 821-833 (RSRPSSDSGAKSS) and 841-867 (SKSTHNNNKSGSKSSSSSNSNNNNKSS). Over residues 879 to 888 (SNHSLGNSRR) the composition is skewed to polar residues.

This sequence in the N-terminal section; belongs to the glycosyltransferase 20 family. In the C-terminal section; belongs to the trehalose phosphatase family. In terms of tissue distribution, expressed in seedlings, leaves, roots, stems, flowers and siliques.

The protein localises to the vacuole. The protein resides in the secreted. Its subcellular location is the cell wall. It is found in the cytoplasm. It carries out the reaction D-glucose 6-phosphate + UDP-alpha-D-glucose = alpha,alpha-trehalose 6-phosphate + UDP + H(+). Its function is as follows. Required for normal embryo development, vegetative growth and transition to flowering. Regulates embryo growth, cell wall deposition, starch and sucrose degradation, but not cell differentiation. Involved in the regulation of glucose sensing and signaling genes during plant development. This chain is Alpha,alpha-trehalose-phosphate synthase [UDP-forming] 1, found in Arabidopsis thaliana (Mouse-ear cress).